The following is a 75-amino-acid chain: UPF0352 protein VSAL_I1058 (75 aa).

Belongs to the UPF0352 family.

This Aliivibrio salmonicida (strain LFI1238) (Vibrio salmonicida (strain LFI1238)) protein is UPF0352 protein VSAL_I1058.